The following is a 133-amino-acid chain: Serine/threonine-protein kinase RsbT (133 aa).

It carries out the reaction L-seryl-[protein] + ATP = O-phospho-L-seryl-[protein] + ADP + H(+). The enzyme catalyses L-threonyl-[protein] + ATP = O-phospho-L-threonyl-[protein] + ADP + H(+). Provides the crucial link between the upstream module (communication of environmental stress) and the downstream module (integration of the environmental signals with signals of energy stress) that compose the signal transduction pathway controlling the sigma-B factor. Phosphorylates and inactivates its specific antagonist protein RsbS thanks to its serine kinase activity. Upon phosphorylation of RsbS, RsbT is released to stimulate RsbU, a PP2C phosphatase, thereby initiating the signaling cascade that ultimately activates sigma-B. The activity of the RsbU phosphatase may be stimulated by a long-lived interaction with RsbT and the serine kinase function of RsbT is not required to directly modify RsbU. Also phosphorylates RsbR thanks to its threonine kinase activity, preventing it to phosphorylate RsbT. The sequence is that of Serine/threonine-protein kinase RsbT (rsbT) from Bacillus subtilis (strain 168).